The chain runs to 362 residues: tRNA-specific 2-thiouridylase MnmA (362 aa).

Residues 8-15 and Met-35 each bind ATP; that span reads AMSGGVDS. The interval 95–97 is interaction with target base in tRNA; it reads NPD. Cys-100 (nucleophile) is an active-site residue. A disulfide bridge connects residues Cys-100 and Cys-196. Gly-124 lines the ATP pocket. The segment at 146–148 is interaction with tRNA; the sequence is KDQ. Cys-196 functions as the Cysteine persulfide intermediate in the catalytic mechanism. The interval 303-304 is interaction with tRNA; it reads RY.

This sequence belongs to the MnmA/TRMU family.

The protein localises to the cytoplasm. The enzyme catalyses S-sulfanyl-L-cysteinyl-[protein] + uridine(34) in tRNA + AH2 + ATP = 2-thiouridine(34) in tRNA + L-cysteinyl-[protein] + A + AMP + diphosphate + H(+). In terms of biological role, catalyzes the 2-thiolation of uridine at the wobble position (U34) of tRNA, leading to the formation of s(2)U34. The sequence is that of tRNA-specific 2-thiouridylase MnmA from Chlamydia abortus (strain DSM 27085 / S26/3) (Chlamydophila abortus).